We begin with the raw amino-acid sequence, 226 residues long: ATP-dependent dethiobiotin synthetase BioD (226 aa).

An ATP-binding site is contributed by Asp-12 to Val-17. Thr-16 provides a ligand contact to Mg(2+). Lys-39 is a catalytic residue. Residue Ser-43 participates in substrate binding. ATP contacts are provided by residues Asp-47, Glu-108–Gly-111, Asn-168–Cys-169, Pro-200–Leu-202, and Asn-207. Residues Asp-47 and Glu-108 each coordinate Mg(2+).

It belongs to the dethiobiotin synthetase family. Homodimer. Mg(2+) serves as cofactor.

It localises to the cytoplasm. It catalyses the reaction (7R,8S)-7,8-diammoniononanoate + CO2 + ATP = (4R,5S)-dethiobiotin + ADP + phosphate + 3 H(+). The catalysed reaction is (7R,8S)-8-amino-7-(carboxyamino)nonanoate + ATP = (4R,5S)-dethiobiotin + ADP + phosphate + H(+). The protein operates within cofactor biosynthesis; biotin biosynthesis; biotin from 7,8-diaminononanoate: step 1/2. In terms of biological role, catalyzes a mechanistically unusual reaction, the ATP-dependent insertion of CO2 between the N7 and N8 nitrogen atoms of 7,8-diaminopelargonic acid (DAPA, also called 7,8-diammoniononanoate) to form a ureido ring. This cyanobacterium does not encode bioA (which catalyzes the formation of the precursor for this reaction in the cannonical pathway), instead it encodes bioU, which replaces bioA and also performs the first half of the cannonical BioD reaction. Thus in this organism BioD has a different substrate. The polypeptide is ATP-dependent dethiobiotin synthetase BioD (Cyanothece sp. (strain PCC 7425 / ATCC 29141)).